Reading from the N-terminus, the 599-residue chain is Aspartate--tRNA(Asp/Asn) ligase (599 aa).

Glu-172 is an L-aspartate binding site. The aspartate stretch occupies residues 196–199; sequence QLFK. Arg-218 is an L-aspartate binding site. ATP contacts are provided by residues 218–220 and Gln-227; that span reads RDE. L-aspartate is bound at residue His-455. Residue Glu-489 participates in ATP binding. Arg-496 lines the L-aspartate pocket. 541–544 is an ATP binding site; sequence GLDR.

The protein belongs to the class-II aminoacyl-tRNA synthetase family. Type 1 subfamily. In terms of assembly, homodimer.

It localises to the cytoplasm. It carries out the reaction tRNA(Asx) + L-aspartate + ATP = L-aspartyl-tRNA(Asx) + AMP + diphosphate. In terms of biological role, aspartyl-tRNA synthetase with relaxed tRNA specificity since it is able to aspartylate not only its cognate tRNA(Asp) but also tRNA(Asn). Reaction proceeds in two steps: L-aspartate is first activated by ATP to form Asp-AMP and then transferred to the acceptor end of tRNA(Asp/Asn). This chain is Aspartate--tRNA(Asp/Asn) ligase, found in Herminiimonas arsenicoxydans.